A 169-amino-acid polypeptide reads, in one-letter code: Putative lipocalin R877 (169 aa).

Positions 1 to 18 are cleaved as a signal peptide; it reads MWIIILIVIIVIITIIFS.

This sequence belongs to the calycin superfamily. Lipocalin family.

Its subcellular location is the secreted. It is found in the virion. Functionally, could play a role in the transport of a small ligand. In Acanthamoeba polyphaga mimivirus (APMV), this protein is Putative lipocalin R877.